A 526-amino-acid polypeptide reads, in one-letter code: G-protein coupled receptor 161 (526 aa).

Residues 1 to 27 (MNGSKNGTAVANSTNGLDDNGLMVLES) lie on the Extracellular side of the membrane. 3 N-linked (GlcNAc...) asparagine glycosylation sites follow: N2, N6, and N12. Residues 28–48 (VSIIIIAILACLGNLVIVVTL) form a helical membrane-spanning segment. Residues 49–60 (YKKPYLLTPSNK) are Cytoplasmic-facing. Residues 61–81 (FVFSLTSSNLLLSVLMLPFVV) form a helical membrane-spanning segment. Topologically, residues 82–98 (ASSVRRDWMFGVVWCNF) are extracellular. A disulfide bond links C96 and C174. N-linked (GlcNAc...) asparagine glycosylation occurs at N97. Residues 99–119 (TALLHLLVSSSSMLTLGAIAI) form a helical membrane-spanning segment. The Cytoplasmic portion of the chain corresponds to 120–139 (DRYYAVLYPMIYPMKITGNR). Residues 140 to 160 (AVLAIVYIWLHSLVGCLPPLF) traverse the membrane as a helical segment. Over 161–186 (GWSSFEFDRFKWTCTVSWHKEISYTA) the chain is Extracellular. A helical transmembrane segment spans residues 187-207 (FWVTWCCLLPLVAMLVCYGVI). Residues 208–263 (FRVARIKARKVYCGSVVVSQEESSSQNNGRKNSNTSTSSSGSRKSLIYSGSQCKAF) lie on the Cytoplasmic side of the membrane. Residues 231–250 (SSQNNGRKNSNTSTSSSGSR) form a disordered region. Residues 264-284 (ITILVVLGTFLTTWGPYVVVI) form a helical membrane-spanning segment. At 285–300 (STEALLGKNSVSPQVE) the chain is on the extracellular side. A helical transmembrane segment spans residues 301–321 (TLVSWLSFTSAVCHPLIYGLW). Residues 322-526 (NKTVRKELLG…EEEMEREEKM (205 aa)) lie on the Cytoplasmic side of the membrane. Residues 505 to 526 (IDEGIVKDDDDDEEEMEREEKM) are disordered. Positions 512 to 526 (DDDDDEEEMEREEKM) are enriched in acidic residues.

Belongs to the G-protein coupled receptor 1 family.

It is found in the cell projection. Its subcellular location is the cilium membrane. It localises to the cell membrane. Functionally, key negative regulator of Shh signaling during neural tube development. Recruited to primary cilia and acts as a regulator of the PKA-dependent basal repression machinery in Shh signaling by increasing cAMP levels, leading to promote the PKA-dependent processing of gli3 into gli3r and repress the Shh signaling. In presence of shh, it is removed from primary cilia, preventing its activity and allowing activation of the Shh signaling. Required in left/right patterning by modulating Ca(2+) levels in the cells surrounding the Kupffer vesicle. This is G-protein coupled receptor 161 (gpr161) from Danio rerio (Zebrafish).